A 306-amino-acid polypeptide reads, in one-letter code: uncharacterized protein (306 aa).

Residue Asp-204 is the Proton acceptor of the active site.

The protein belongs to the aminoglycoside phosphotransferase family.

This is an uncharacterized protein from Bacillus subtilis (strain 168).